Here is a 327-residue protein sequence, read N- to C-terminus: Zinc transport protein ZntB (327 aa).

Over 1 to 273 (MEAIKGADVN…ARRTYTMSLM (273 aa)) the chain is Cytoplasmic. The chain crosses the membrane as a helical span at residues 274–294 (AMVFLPSTFLTGLFGVNLGGI). The Periplasmic portion of the chain corresponds to 295–300 (PGGGWR). Residues 301 to 321 (FGFSLFCILLVVLIGGVALWL) form a helical membrane-spanning segment. Over 322 to 327 (HRSKWL) the chain is Cytoplasmic.

This sequence belongs to the CorA metal ion transporter (MIT) (TC 1.A.35) family.

It is found in the cell inner membrane. The catalysed reaction is Zn(2+)(out) + H(+)(out) = Zn(2+)(in) + H(+)(in). Functionally, zinc transporter. Acts as a Zn(2+):proton symporter, which likely mediates zinc ion uptake. This chain is Zinc transport protein ZntB, found in Escherichia fergusonii (strain ATCC 35469 / DSM 13698 / CCUG 18766 / IAM 14443 / JCM 21226 / LMG 7866 / NBRC 102419 / NCTC 12128 / CDC 0568-73).